Reading from the N-terminus, the 319-residue chain is MSLNFLDFEQPIAELEAKIDSLTAVSRQDEKLDINIDEEVHRLREKSVELTRKIFADLGAWQIAQLARHPQRPYTLDYVRLAFDEFDELAGDRAYADDKAIVGGIARLDGRPVMIIGHQKGRETKEKIRRNFGMPAPEGYRKALRLMQMAERFKMPIITFIDTPGAYPGVGAEERGQSEAIARNLREMSRLSVPTICTVIGEGGSGGALAIGVGDKVNMLQYSTYSVISPEGCASILWKSADKAPLAAEAMGIIAPRLKELKLIDSIIPEPLGGAHRNPEAMAASLKAQLLADLADLDVLSTEDLKNRRYQRLMSYGYA.

In terms of domain architecture, CoA carboxyltransferase C-terminal spans 35-296 (NIDEEVHRLR…KAQLLADLAD (262 aa)).

The protein belongs to the AccA family. As to quaternary structure, acetyl-CoA carboxylase is a heterohexamer composed of biotin carboxyl carrier protein (AccB), biotin carboxylase (AccC) and two subunits each of ACCase subunit alpha (AccA) and ACCase subunit beta (AccD).

The protein localises to the cytoplasm. The enzyme catalyses N(6)-carboxybiotinyl-L-lysyl-[protein] + acetyl-CoA = N(6)-biotinyl-L-lysyl-[protein] + malonyl-CoA. It participates in lipid metabolism; malonyl-CoA biosynthesis; malonyl-CoA from acetyl-CoA: step 1/1. Functionally, component of the acetyl coenzyme A carboxylase (ACC) complex. First, biotin carboxylase catalyzes the carboxylation of biotin on its carrier protein (BCCP) and then the CO(2) group is transferred by the carboxyltransferase to acetyl-CoA to form malonyl-CoA. The sequence is that of Acetyl-coenzyme A carboxylase carboxyl transferase subunit alpha from Escherichia coli O127:H6 (strain E2348/69 / EPEC).